A 161-amino-acid polypeptide reads, in one-letter code: Allophycocyanin beta chain (161 aa).

Asn-71 carries the post-translational modification N4-methylasparagine. Position 81 (Cys-81) interacts with (2R,3E)-phycocyanobilin.

Belongs to the phycobiliprotein family. As to quaternary structure, heterodimer of an alpha and a beta chain. In terms of processing, contains one covalently linked phycocyanobilin chromophore.

The protein localises to the plastid. The protein resides in the cyanelle thylakoid membrane. Functionally, light-harvesting photosynthetic bile pigment-protein from the phycobiliprotein complex. Allophycocyanin has a maximum absorption at approximately 650 nanometers. This Cyanophora paradoxa protein is Allophycocyanin beta chain (apcB).